Reading from the N-terminus, the 1116-residue chain is Probable chitinase LysM11 (1116 aa).

Residues 233–283 enclose the LysM domain; the sequence is GTYTIQTNDNCAEIAAHFGVTQDDIYDLNEDTWGWAGCGTNDLKADQVICL. A GH18 domain is found at 346 to 719; it reads FYHVAYFEVF…LGVDPDSDEA (374 aa). E466 (proton donor) is an active-site residue. Chitin-binding residues include Y467 and W701.

Belongs to the glycosyl hydrolase 18 family. Chitinase class V subfamily.

It carries out the reaction Random endo-hydrolysis of N-acetyl-beta-D-glucosaminide (1-&gt;4)-beta-linkages in chitin and chitodextrins.. Its function is as follows. Probable chitinase involved in the degradation of chitin, a component of the cell walls of fungi and exoskeletal elements of some animals (including worms and arthropods). Might be involved in manipulation of host defenses for successful infection. In Penicillium expansum (Blue mold rot fungus), this protein is Probable chitinase LysM11.